The sequence spans 67 residues: Large ribosomal subunit protein bL35 (67 aa).

Basic residues predominate over residues 1 to 11; it reads MPKLKTRKAAA. The disordered stretch occupies residues 1–22; that stretch reads MPKLKTRKAAAKRFEATGSGKK.

Belongs to the bacterial ribosomal protein bL35 family.

This chain is Large ribosomal subunit protein bL35, found in Microcystis aeruginosa (strain NIES-843 / IAM M-2473).